The sequence spans 1522 residues: DNA topoisomerase 2-binding protein 1 (1522 aa).

2 consecutive BRCT domains span residues 101–189 and 195–284; these read VYNM…RYTD and FKCP…IYKT. Thr-298 is subject to Phosphothreonine. Ser-301 carries the phosphoserine modification. 3 consecutive BRCT domains span residues 354-444, 548-633, and 641-738; these read APED…PYIH, TEEG…SNPL, and TGMT…HFLI. The segment at 756 to 891 is interaction with CIP2A; that stretch reads INLNSDTAEH…AVALSASPQL (136 aa). 2 positions are modified to phosphothreonine: Thr-779 and Thr-848. Residues 852 to 858 carry the Nuclear localization signal motif; it reads PSQQKRK. Residue Ser-860 is modified to Phosphoserine. Thr-861 carries the phosphothreonine modification. A phosphoserine mark is found at Ser-864, Ser-886, and Ser-888. One can recognise a BRCT 6 domain in the interval 900 to 991; the sequence is EAPKPLHKVV…KHLPESLYPH (92 aa). Residue Ser-1002 is modified to Phosphoserine. Residues 1018-1058 are disordered; the sequence is VSSTKDDEPDPLILEENDVDNMATNNKESAPSNGSGKNDSK. Acidic residues predominate over residues 1024–1036; sequence DEPDPLILEENDV. Polar residues predominate over residues 1039–1058; sequence MATNNKESAPSNGSGKNDSK. Phosphothreonine is present on residues Thr-1062 and Thr-1064. The segment covering 1083 to 1114 has biased composition (polar residues); sequence SIVKPQGQRTSLSRSGCNSASSTPDSTRSARS. The tract at residues 1083-1118 is disordered; it reads SIVKPQGQRTSLSRSGCNSASSTPDSTRSARSGRSR. BRCT domains lie at 1259-1351 and 1389-1486; these read ETHE…DYEW and IVEG…NYCL. The tract at residues 1501–1522 is disordered; the sequence is TGLSQKRKAPTEKNKIKRPRVH. Ser-1504 is modified (phosphoserine). The short motif at 1517 to 1520 is the Nuclear localization signal element; the sequence is KRPR.

Belongs to the TOPBP1 family. In terms of assembly, interacts (via BRCT domains 1 and 2) with (phosphorylated) MDC1; promoting TOPBP1 recruitment to DNA damage sites during mitosis. Interacts (via BRCT domains 7 and 8) with (autophosphorylated) ATR; promoting activation of ATR. Interacts (via BRCT domains 7 and 8) with (phosphorylated) POLQ; specifically binds POLQ phosphorylated by PLK1, promoting POLQ recruitment to DNA damage sites. Interacts (via BRCT domains 1 and 2) with (phosphorylated) RAD9A. Interacts (via BRCT domain 2) with (phosphorylated) TP53BP1. Interacts (via BRCT domain 2) with (phosphorylated) HTATSF1. Interacts (via BRCT domains 7 and 8) with (phosphorylated) RAD51; promoting RAD51 recruitment to damaged chromatin. Interacts with CIP2A; forming the CIP2A-TOPBP1 complex. Interacts with POLE. Interacts with UBR5. Interacts with E2F1. Interacts with PML. Interacts with SMARCA2. Interacts with SMARCA4. Interacts with RHNO1. May interact with TOP2B. Interacts with TICRR. Interacts with HELB. Interacts (via residues 1233-1522) with RECQL4. Phosphorylated on serine and threonine residues in response to X-ray irradiation. Post-translationally, ubiquitinated and degraded by the proteasome. X-ray irradiation reduces ubiquitination. Deubiquitinated by USP13; leading to TOPBP1 stabilizion and activation of the ATR-TOPBP1 axis pathway. In terms of tissue distribution, highly expressed in heart, brain, placenta, lung and kidney.

The protein localises to the nucleus. It is found in the chromosome. It localises to the cytoplasm. Its subcellular location is the cytoskeleton. The protein resides in the microtubule organizing center. The protein localises to the centrosome. It is found in the spindle pole. Its function is as follows. Scaffold protein that acts as a key protein-protein adapter in DNA replication and DNA repair. Composed of multiple BRCT domains, which specifically recognize and bind phosphorylated proteins, bringing proteins together into functional combinations. Required for DNA replication initiation but not for the formation of pre-replicative complexes or the elongation stages. Necessary for the loading of replication factors onto chromatin, including GMNC, CDC45, DNA polymerases and components of the GINS complex. Plays a central role in DNA repair by bridging proteins and promoting recruitment of proteins to DNA damage sites. Involved in double-strand break (DSB) repair via homologous recombination in S-phase by promoting the exchange between the DNA replication factor A (RPA) complex and RAD51. Mechanistically, TOPBP1 is recruited to DNA damage sites in S-phase via interaction with phosphorylated HTATSF1, and promotes the loading of RAD51, thereby facilitating RAD51 nucleofilaments formation and RPA displacement, followed by homologous recombination. Involved in microhomology-mediated end-joining (MMEJ) DNA repair by promoting recruitment of polymerase theta (POLQ) to DNA damage sites during mitosis. MMEJ is an alternative non-homologous end-joining (NHEJ) machinery that takes place during mitosis to repair DSBs in DNA that originate in S-phase. Recognizes and binds POLQ phosphorylated by PLK1, enabling its recruitment to DSBs for subsequent repair. Involved in G1 DNA damage checkpoint by acting as a molecular adapter that couples TP53BP1 and the 9-1-1 complex. In response to DNA damage, triggers the recruitment of checkpoint signaling proteins on chromatin, which activate the CHEK1 signaling pathway and block S-phase progression. Acts as an activator of the kinase activity of ATR. Also required for chromosomal stability when DSBs occur during mitosis by forming filamentous assemblies that bridge MDC1 and tether broken chromosomes during mitosis. Together with CIP2A, plays an essential role in the response to genome instability generated by the presence of acentric chromosome fragments derived from shattered chromosomes within micronuclei. Micronuclei, which are frequently found in cancer cells, consist of chromatin surrounded by their own nuclear membrane: following breakdown of the micronuclear envelope, a process associated with chromothripsis, the CIP2A-TOPBP1 complex tethers chromosome fragments during mitosis to ensure clustered segregation of the fragments to a single daughter cell nucleus, facilitating re-ligation with limited chromosome scattering and loss. Recruits the SWI/SNF chromatin remodeling complex to E2F1-responsive promoters, thereby down-regulating E2F1 activity and inhibiting E2F1-dependent apoptosis during G1/S transition and after DNA damage. The protein is DNA topoisomerase 2-binding protein 1 of Homo sapiens (Human).